The following is a 341-amino-acid chain: MGTLPWLLAFFILGLQAWDTPTIVSRKEWGARPLACRALLTLPVAYIITDQLPGMQCQQQSVCSQMLRGLQSHSVYTIGWCDVAYNFLVGDDGRVYEGVGWNIQGLHTQGYNNISLGIAFFGNKIGSSPSPAALSAAEGLISYAIQKGHLSPRYIQPLLLKEETCLDPQHPVMPRKVCPNIIKRSAWEARETHCPKMNLPAKYVIIIHTAGTSCTVSTDCQTVVRNIQSFHMDTRNFCDIGYHFLVGQDGGVYEGVGWHIQGSHTYGFNDIALGIAFIGYFVEKPPNAAALEAAQDLIQCAVVEGYLTPNYLLMGHSDVVNILSPGQALYNIISTWPHFKH.

Positions 1–17 (MGTLPWLLAFFILGLQA) are cleaved as a signal peptide. N-acetylmuramoyl-L-alanine amidase domains follow at residues 77–179 (TIGW…KVCP) and 200–325 (PAKY…ILSP). Residue Asn113 is glycosylated (N-linked (GlcNAc...) asparagine). 3 disulfides stabilise this stretch: Cys178–Cys300, Cys194–Cys238, and Cys214–Cys220. Positions 231, 235, and 242 each coordinate peptidoglycan. The interval 264–269 (HTYGFN) is interaction with murein.

This sequence belongs to the N-acetylmuramoyl-L-alanine amidase 2 family. In terms of assembly, monomer. Homodimer; disulfide-linked. Heterodimer with PGLYRP4; disulfide-linked. Post-translationally, N-glycosylated. In terms of tissue distribution, detected in skin epidermis, eccrine sweat glands and ducts, ciliary body epithelial cells of the eye, in small intestine, colon, stomach and in mature epithelial cells of the tongue (at protein level). Highly expressed in skin and esophagus, expressed also in tonsils and thymus and to a much lesser extent in the stomach, descending colon, rectum and brain.

Its subcellular location is the secreted. Pattern receptor that binds to murein peptidoglycans (PGN) of Gram-positive bacteria. Has bactericidal activity towards Gram-positive bacteria. May kill Gram-positive bacteria by interfering with peptidoglycan biosynthesis. Also binds to Gram-negative bacteria, and has bacteriostatic activity towards Gram-negative bacteria. Plays a role in innate immunity. This chain is Peptidoglycan recognition protein 3 (PGLYRP3), found in Homo sapiens (Human).